We begin with the raw amino-acid sequence, 200 residues long: Probable nicotinate-nucleotide adenylyltransferase (200 aa).

The protein belongs to the NadD family.

The enzyme catalyses nicotinate beta-D-ribonucleotide + ATP + H(+) = deamido-NAD(+) + diphosphate. It functions in the pathway cofactor biosynthesis; NAD(+) biosynthesis; deamido-NAD(+) from nicotinate D-ribonucleotide: step 1/1. In terms of biological role, catalyzes the reversible adenylation of nicotinate mononucleotide (NaMN) to nicotinic acid adenine dinucleotide (NaAD). This chain is Probable nicotinate-nucleotide adenylyltransferase, found in Clavibacter sepedonicus (Clavibacter michiganensis subsp. sepedonicus).